A 362-amino-acid polypeptide reads, in one-letter code: Peptide chain release factor 1 (362 aa).

The residue at position 240 (glutamine 240) is an N5-methylglutamine.

It belongs to the prokaryotic/mitochondrial release factor family. Methylated by PrmC. Methylation increases the termination efficiency of RF1.

Its subcellular location is the cytoplasm. Peptide chain release factor 1 directs the termination of translation in response to the peptide chain termination codons UAG and UAA. The protein is Peptide chain release factor 1 of Bifidobacterium adolescentis (strain ATCC 15703 / DSM 20083 / NCTC 11814 / E194a).